Consider the following 245-residue polypeptide: Probable ABC transporter permease protein HI_0355 (245 aa).

Transmembrane regions (helical) follow at residues 9 to 29 (LLIVGVLLMIWQMVATLGSFP), 61 to 81 (ICLGLLLGFLFGLISALLLSF), 92 to 112 (ILVISQAIPVFAIAPLLVLWF), 115 to 135 (GMASKIVMSVLIIYFPVTAAC), 170 to 190 (LPAFASGLRIAVSVAPIGAVV), and 217 to 237 (FAALLILVSISLCLYFSIDWL). Residues 50–234 (LWQHTQVTLL…SISLCLYFSI (185 aa)) form the ABC transmembrane type-1 domain.

It belongs to the binding-protein-dependent transport system permease family. CysTW subfamily.

It localises to the cell inner membrane. Functionally, probably part of a binding-protein-dependent transport system. Probably responsible for the translocation of the substrate across the membrane. The sequence is that of Probable ABC transporter permease protein HI_0355 from Haemophilus influenzae (strain ATCC 51907 / DSM 11121 / KW20 / Rd).